The primary structure comprises 457 residues: Argininosuccinate lyase (457 aa).

Belongs to the lyase 1 family. Argininosuccinate lyase subfamily.

The protein localises to the cytoplasm. It catalyses the reaction 2-(N(omega)-L-arginino)succinate = fumarate + L-arginine. Its pathway is amino-acid biosynthesis; L-arginine biosynthesis; L-arginine from L-ornithine and carbamoyl phosphate: step 3/3. The polypeptide is Argininosuccinate lyase (Bacillus pumilus (strain SAFR-032)).